The sequence spans 381 residues: MYLSRFKQSGFRNLAPLNLEFDPHVNVFLGENAQGKTNLLEAIYFLAISRSHRTSNDREMIAFGQDFASLAGRVHKRQLDLDLRIVISKKGKSAWVNRVEQARLSKYVGHLNAILFSPEDMELVKGAPSLRRRFMDLEFGQINPEYLYFASQYRQLLQQRNNYLKQLARRQASDQVLLGVLTEQVATAASELIWRRYRYLADLNRYAAEAYRAISGQREELRVLYRPSAKEITAADQPAQIKQKLLDRFAEIADDELRRATTQLGPHRDDLEFQLDGKNAHLFASQGQQRTIALSLKLAEIQLIKQLTGEEPILLLDDVMSELDQNRQAALLNFIHGQTQTFITTTDLDSISQEIVKQPRIFYIHSGQIIEKEEGLNGRRR.

30-37 (GENAQGKT) is a binding site for ATP.

The protein belongs to the RecF family.

Its subcellular location is the cytoplasm. Functionally, the RecF protein is involved in DNA metabolism; it is required for DNA replication and normal SOS inducibility. RecF binds preferentially to single-stranded, linear DNA. It also seems to bind ATP. The polypeptide is DNA replication and repair protein RecF (Lactobacillus delbrueckii subsp. bulgaricus (strain ATCC 11842 / DSM 20081 / BCRC 10696 / JCM 1002 / NBRC 13953 / NCIMB 11778 / NCTC 12712 / WDCM 00102 / Lb 14)).